The primary structure comprises 209 residues: Ribonuclease HII (209 aa).

The RNase H type-2 domain maps to 20–209 (GLVAGVDEAG…VARSLPGACR (190 aa)). 3 residues coordinate a divalent metal cation: D26, E27, and D118.

This sequence belongs to the RNase HII family. It depends on Mn(2+) as a cofactor. Mg(2+) is required as a cofactor.

It is found in the cytoplasm. It catalyses the reaction Endonucleolytic cleavage to 5'-phosphomonoester.. Its function is as follows. Endonuclease that specifically degrades the RNA of RNA-DNA hybrids. This chain is Ribonuclease HII, found in Verminephrobacter eiseniae (strain EF01-2).